The chain runs to 290 residues: Inorganic pyrophosphatase (290 aa).

Residue arginine 81 participates in diphosphate binding. Residues aspartate 118, aspartate 123, and aspartate 155 each contribute to the Mg(2+) site.

Belongs to the PPase family. It depends on Mg(2+) as a cofactor.

It localises to the cytoplasm. The enzyme catalyses diphosphate + H2O = 2 phosphate + H(+). The protein is Inorganic pyrophosphatase (ipp-1) of Neurospora crassa (strain ATCC 24698 / 74-OR23-1A / CBS 708.71 / DSM 1257 / FGSC 987).